The primary structure comprises 1033 residues: Isoleucine--tRNA ligase 2 (1033 aa).

The 'HIGH' region motif lies at 47–57; it reads PTANGLPHVGH. A 'KMSKS' region motif is present at residues 590 to 594; the sequence is KMSKS. Lys-593 is an ATP binding site.

Belongs to the class-I aminoacyl-tRNA synthetase family. IleS type 2 subfamily. As to quaternary structure, monomer. Requires Zn(2+) as cofactor.

It localises to the cytoplasm. It catalyses the reaction tRNA(Ile) + L-isoleucine + ATP = L-isoleucyl-tRNA(Ile) + AMP + diphosphate. Catalyzes the attachment of isoleucine to tRNA(Ile). As IleRS can inadvertently accommodate and process structurally similar amino acids such as valine, to avoid such errors it has two additional distinct tRNA(Ile)-dependent editing activities. One activity is designated as 'pretransfer' editing and involves the hydrolysis of activated Val-AMP. The other activity is designated 'posttransfer' editing and involves deacylation of mischarged Val-tRNA(Ile). The polypeptide is Isoleucine--tRNA ligase 2 (Bacillus anthracis).